The primary structure comprises 275 residues: Pantothenate synthetase (275 aa).

Residue 26–33 (MGNLHDGH) participates in ATP binding. The active-site Proton donor is H33. Q57 lines the (R)-pantoate pocket. Q57 contacts beta-alanine. Residue 144–147 (GKKD) coordinates ATP. Residue Q150 coordinates (R)-pantoate. ATP-binding positions include V173 and 181-184 (LSSR).

It belongs to the pantothenate synthetase family. Homodimer.

The protein resides in the cytoplasm. It carries out the reaction (R)-pantoate + beta-alanine + ATP = (R)-pantothenate + AMP + diphosphate + H(+). Its pathway is cofactor biosynthesis; (R)-pantothenate biosynthesis; (R)-pantothenate from (R)-pantoate and beta-alanine: step 1/1. Catalyzes the condensation of pantoate with beta-alanine in an ATP-dependent reaction via a pantoyl-adenylate intermediate. This is Pantothenate synthetase from Azoarcus sp. (strain BH72).